Reading from the N-terminus, the 1203-residue chain is DNA-directed RNA polymerase subunit beta' (1203 aa).

Zn(2+)-binding residues include Cys60, Cys62, Cys75, and Cys78. 3 residues coordinate Mg(2+): Asp449, Asp451, and Asp453. Cys818, Cys892, Cys899, and Cys902 together coordinate Zn(2+).

This sequence belongs to the RNA polymerase beta' chain family. As to quaternary structure, the RNAP catalytic core consists of 2 alpha, 1 beta, 1 beta' and 1 omega subunit. When a sigma factor is associated with the core the holoenzyme is formed, which can initiate transcription. It depends on Mg(2+) as a cofactor. The cofactor is Zn(2+).

It catalyses the reaction RNA(n) + a ribonucleoside 5'-triphosphate = RNA(n+1) + diphosphate. Its function is as follows. DNA-dependent RNA polymerase catalyzes the transcription of DNA into RNA using the four ribonucleoside triphosphates as substrates. The protein is DNA-directed RNA polymerase subunit beta' of Bacillus mycoides (strain KBAB4) (Bacillus weihenstephanensis).